Consider the following 398-residue polypeptide: E3 ubiquitin-protein ligase RSL1 (398 aa).

The TRIAD supradomain stretch occupies residues 155 to 374 (QKETCNICLN…LDLTQCCGSC (220 aa)). Zn(2+)-binding residues include cysteine 159, cysteine 162, cysteine 183, cysteine 186, cysteine 246, cysteine 251, cysteine 271, cysteine 274, cysteine 279, cysteine 282, histidine 287, cysteine 292, cysteine 321, and cysteine 324. The RING-type 3; degenerate zinc finger occupies 159–207 (CNICLNDDINADQMFSVDKSGHMCCSECVKRHIEVRLLEGSLITCPHYR). The RING-type 1 zinc-finger motif lies at 159-208 (CNICLNDDINADQMFSVDKSGHMCCSECVKRHIEVRLLEGSLITCPHYRC). Residues 233 to 292 (TKDELIPVMDRVYCPNPRCSTLMSETELSGLNIGVRRCCVKCGEPFCVKCKVSWHNNLSC) form an IBR-type zinc finger. The RING-type 2; atypical zinc finger occupies 321–349 (CSKCKHMIELSSGCISVVCRCGHTFCYQC). The segment at 321–356 (CSKCKHMIELSSGCISVVCRCGHTFCYQCGADAGDC) adopts an RING-type 4; degenerate zinc-finger fold. Residue cysteine 334 is part of the active site. Positions 339, 341, 346, 349, 358, and 370 each coordinate Zn(2+). The chain crosses the membrane as a helical span at residues 374-394 (CCCFVFFLVIIAIVVTIILLV).

The protein belongs to the RBR family. Interacts with the PYL4 and PYR1 ABA receptors at the plasma membrane. The cofactor is Zn(2+).

Its subcellular location is the cell membrane. It localises to the vacuole membrane. The enzyme catalyses [E2 ubiquitin-conjugating enzyme]-S-ubiquitinyl-L-cysteine + [acceptor protein]-L-lysine = [E2 ubiquitin-conjugating enzyme]-L-cysteine + [acceptor protein]-N(6)-ubiquitinyl-L-lysine.. It functions in the pathway protein modification; protein ubiquitination. Acts as an E3 ubiquitin-protein ligase, or as part of E3 complex, which accepts ubiquitin from specific E2 ubiquitin-conjugating enzymes and then transfers it to substrates. Negative regulator of the abscisic acid (ABA) signaling pathway which targets PYL4 and PYR1 ABA receptors in plasma membrane to promote their FREE1/FYVE1-dependent trafficking and degradation upon ubiquitynation; this process involves clathrin-mediated endocytosis and trafficking through the ESCRT pathway. Involved in the maintenance of seed longevity. May enhance gibberellins responses. This is E3 ubiquitin-protein ligase RSL1 from Arabidopsis thaliana (Mouse-ear cress).